Reading from the N-terminus, the 185-residue chain is ATP-dependent protease subunit HslV (185 aa).

Threonine 12 is a catalytic residue. 3 residues coordinate Na(+): alanine 168, cysteine 171, and threonine 174.

The protein belongs to the peptidase T1B family. HslV subfamily. As to quaternary structure, a double ring-shaped homohexamer of HslV is capped on each side by a ring-shaped HslU homohexamer. The assembly of the HslU/HslV complex is dependent on binding of ATP.

Its subcellular location is the cytoplasm. The catalysed reaction is ATP-dependent cleavage of peptide bonds with broad specificity.. Allosterically activated by HslU binding. Its function is as follows. Protease subunit of a proteasome-like degradation complex believed to be a general protein degrading machinery. The polypeptide is ATP-dependent protease subunit HslV (Ruegeria pomeroyi (strain ATCC 700808 / DSM 15171 / DSS-3) (Silicibacter pomeroyi)).